The primary structure comprises 314 residues: tRNA(Ile)-lysidine synthase, chloroplastic (314 aa).

Ser-31 to Ser-36 is an ATP binding site.

It belongs to the tRNA(Ile)-lysidine synthase family.

Its subcellular location is the plastid. It is found in the chloroplast. The enzyme catalyses cytidine(34) in tRNA(Ile2) + L-lysine + ATP = lysidine(34) in tRNA(Ile2) + AMP + diphosphate + H(+). In terms of biological role, ligates lysine onto the cytidine present at position 34 of the AUA codon-specific tRNA(Ile) that contains the anticodon CAU, in an ATP-dependent manner. Cytidine is converted to lysidine, thus changing the amino acid specificity of the tRNA from methionine to isoleucine. The sequence is that of tRNA(Ile)-lysidine synthase, chloroplastic from Cyanidium caldarium (Red alga).